The chain runs to 76 residues: Nemertide alpha-1 (76 aa).

The signal sequence occupies residues 1-28 (YRIASSSIAKMKTAVFLVGLLFLGLVFA). Residues 29-44 (DEAAIDSEFDQSIDKR) constitute a propeptide that is removed on maturation. Disulfide bonds link Cys46–Cys60, Cys53–Cys64, and Cys59–Cys70. Pro72 and Pro73 each carry 4-hydroxyproline.

The protein belongs to the nemertide family. As to expression, confined to the epidermis and to the mucus layer.

The protein resides in the secreted. Highly potent toxin against insect sodium channel (Nav) and with less potent activity against mammalian sodium channels. Potently inhibits inactivation of insect sodium channels of B.germanica (BgNav1) (EC(50)=8.6 nM), D.melanogaster (Dm Nav1), and arachnid sodium channel V.destructor (VdNav1). Also delays the inactivation of most mammalian Nav channels tested (human Nav1.1/SCN1A; EC(50)=124.1 nM, rat Nav1.2/SCN2A; EC(50)=359.6 nM, rat Nav1.3/SCN3A; EC(50)=135.4 nM, rat Nav1.4/SCN4A; EC(50)=145.5 nM, human Nav1.5/SCN5A; EC(50)=138.3 nM, mouse Nav1.6/SCN8A; EC(50)=240.4 nM, human Nav1.9/SCN9A; EC(50)=76.5 nM). 1 uM is enough to completely inhibits the inactivation, resulting in sustained non-inactivating currents. In addition, the toxin significantly enhances the recovery from inactivation, and the open state is not required for the toxin to interact with the channel. In vivo, injection into green crabs (Carcinus maenas at 1 mug/kg) of small doses (1-5 ug/kg) results in slow and fast permanent paralysis, whereas injection of high doses (more than 10 ug/kg) causes death. Injection into juvenile Blaptica dubia cockroaches results in death or permanent paralysis at doses higher than 7.1 ug/kg. Injection into brine shrimp (Artemia salina) stops movement or causes death after 24 hours (EC(50)=0.3 uM). In the rare inherited cardiac arrhythmia Brugada syndrome 1 (BRGDA1), this toxin is able to restore the loss of function by reducing channel inactivation, without affecting activation, by binding to Nav1.5/SCN5A. The sequence is that of Nemertide alpha-1 from Lineus lacteus (Ribbon worm).